A 271-amino-acid polypeptide reads, in one-letter code: Co-chaperone protein DjlA (271 aa).

At 1–6 (MQYWGK) the chain is on the periplasmic side. The helical transmembrane segment at 7 to 31 (IIGVAVALLMGGGFWGVVLGLLIGH) threads the bilayer. Residues 32 to 271 (MFDKARSRKM…ELIKQQKGFK (240 aa)) lie on the Cytoplasmic side of the membrane. Residues 205 to 271 (DACNVLGVKP…ELIKQQKGFK (67 aa)) form the J domain.

Homodimer.

It localises to the cell inner membrane. Functionally, regulatory DnaK co-chaperone. Direct interaction between DnaK and DjlA is needed for the induction of the wcaABCDE operon, involved in the synthesis of a colanic acid polysaccharide capsule, possibly through activation of the RcsB/RcsC phosphotransfer signaling pathway. The colanic acid capsule may help the bacterium survive conditions outside the host. In Escherichia coli (strain K12), this protein is Co-chaperone protein DjlA.